A 390-amino-acid chain; its full sequence is Homoserine O-succinyltransferase (390 aa).

In terms of domain architecture, AB hydrolase-1 spans 59-369 (NAVLVCHALN…PHGHDAFLLD (311 aa)). Ser-165 (nucleophile) is an active-site residue. A substrate-binding site is contributed by Arg-235. Residues Asp-330 and His-363 contribute to the active site. Asp-364 provides a ligand contact to substrate.

It belongs to the AB hydrolase superfamily. MetX family. In terms of assembly, homodimer.

The protein resides in the cytoplasm. The catalysed reaction is L-homoserine + succinyl-CoA = O-succinyl-L-homoserine + CoA. It functions in the pathway amino-acid biosynthesis; L-methionine biosynthesis via de novo pathway; O-succinyl-L-homoserine from L-homoserine: step 1/1. In terms of biological role, transfers a succinyl group from succinyl-CoA to L-homoserine, forming succinyl-L-homoserine. The protein is Homoserine O-succinyltransferase of Cupriavidus pinatubonensis (strain JMP 134 / LMG 1197) (Cupriavidus necator (strain JMP 134)).